Reading from the N-terminus, the 395-residue chain is Pesticidal crystal protein Cry6Ba (395 aa).

This sequence belongs to the cry6A endotoxin family.

Endotoxin with nematicidal activity. The protein is Pesticidal crystal protein Cry6Ba (cry6Ba) of Bacillus thuringiensis.